We begin with the raw amino-acid sequence, 286 residues long: Penicillin-insensitive murein endopeptidase (286 aa).

The signal sequence occupies residues 1-22 (MNKILLKTTIIFTALFSLNVVA). Residues H117, H120, D127, D152, and H218 each contribute to the Zn(2+) site.

Belongs to the peptidase M74 family. Requires Zn(2+) as cofactor.

The protein localises to the periplasm. Its function is as follows. Murein endopeptidase that cleaves the D-alanyl-meso-2,6-diamino-pimelyl amide bond that connects peptidoglycan strands. Likely plays a role in the removal of murein from the sacculus. The polypeptide is Penicillin-insensitive murein endopeptidase (mepA) (Haemophilus influenzae (strain ATCC 51907 / DSM 11121 / KW20 / Rd)).